We begin with the raw amino-acid sequence, 1230 residues long: Ubiquitin carboxyl-terminal hydrolase 15 (1230 aa).

The MATH domain occupies 39–179 (EDSFTWNIPD…EGTLNITAYV (141 aa)). A USP domain is found at 205-536 (VGFRNQGATC…SAYMLVYIRQ (332 aa)). Catalysis depends on cysteine 214, which acts as the Nucleophile. Residue histidine 465 is the Proton acceptor of the active site.

The protein belongs to the peptidase C19 family. In terms of assembly, interacts with PEX6; promoting association with the PEX1-PEX6 ATPase complex.

It localises to the cytoplasm. The protein resides in the cytosol. The protein localises to the peroxisome. The enzyme catalyses Thiol-dependent hydrolysis of ester, thioester, amide, peptide and isopeptide bonds formed by the C-terminal Gly of ubiquitin (a 76-residue protein attached to proteins as an intracellular targeting signal).. Its function is as follows. Deubiquitinase involved in peroxisome import by mediating deubiquitination of the peroxisomal import receptor PEX5. Catalyzes deubiquitination of both monoubiquitiated and polyubiquitinated forms of PEX5 following its retrotranslocation into the cytosol, resetting PEX5 for a subsequent import cycle. This chain is Ubiquitin carboxyl-terminal hydrolase 15, found in Saccharomyces cerevisiae (strain ATCC 204508 / S288c) (Baker's yeast).